The sequence spans 664 residues: UvrABC system protein B (664 aa).

Residues lysine 25–arginine 182 form the Helicase ATP-binding domain. Glycine 38 to threonine 45 is a binding site for ATP. Residues tyrosine 91–methionine 114 carry the Beta-hairpin motif. Positions glutamine 429–leucine 595 constitute a Helicase C-terminal domain. The region spanning aspartate 625–aspartate 660 is the UVR domain.

The protein belongs to the UvrB family. As to quaternary structure, forms a heterotetramer with UvrA during the search for lesions. Interacts with UvrC in an incision complex.

The protein resides in the cytoplasm. Its function is as follows. The UvrABC repair system catalyzes the recognition and processing of DNA lesions. A damage recognition complex composed of 2 UvrA and 2 UvrB subunits scans DNA for abnormalities. Upon binding of the UvrA(2)B(2) complex to a putative damaged site, the DNA wraps around one UvrB monomer. DNA wrap is dependent on ATP binding by UvrB and probably causes local melting of the DNA helix, facilitating insertion of UvrB beta-hairpin between the DNA strands. Then UvrB probes one DNA strand for the presence of a lesion. If a lesion is found the UvrA subunits dissociate and the UvrB-DNA preincision complex is formed. This complex is subsequently bound by UvrC and the second UvrB is released. If no lesion is found, the DNA wraps around the other UvrB subunit that will check the other stand for damage. This chain is UvrABC system protein B, found in Leptospira biflexa serovar Patoc (strain Patoc 1 / Ames).